The sequence spans 796 residues: Ent-copalyl diphosphate synthase 4 (796 aa).

Residues 1–23 (MSSSSIVTSLLRPTTAADGVLPR) constitute a chloroplast transit peptide. Lysine 240 is a binding site for substrate. 2 residues coordinate Mg(2+): aspartate 371 and aspartate 373. Positions 371-374 (DVDD) match the DXDD motif motif. Residue lysine 457 coordinates substrate.

The protein belongs to the terpene synthase family. Tpsc subfamily. It depends on Mg(2+) as a cofactor. Highly expressed in leaves, and, at low levels, in stems, but barely in roots and flowers.

It localises to the plastid. It is found in the chloroplast. The catalysed reaction is (2E,6E,10E)-geranylgeranyl diphosphate = ent-copalyl diphosphate. The protein operates within secondary metabolite biosynthesis; terpenoid biosynthesis. In terms of biological role, involved in the biosynthesis of ent-kaurene diterpenoids natural products such as oridonin, miltiradiene, eriocalyxin B and nezukol, known to exhibit antitumor, anti-inflammatory and antibacterial activities. Catalyzes the conversion of (2E,6E,10E)-geranylgeranyl diphosphate (GGPP) to ent-copalyl diphosphate (ent-CPP). This Isodon rubescens (Rabdosia rubescens) protein is Ent-copalyl diphosphate synthase 4.